Reading from the N-terminus, the 559-residue chain is DNA primase (559 aa).

The CHC2-type zinc-finger motif lies at 37–61 (CPFHEERSASFSVNQVKGFYYCFGC). A Toprim domain is found at 246 to 327 (KQVIVTEGYL…KGGVILFENN (82 aa)). Mg(2+) contacts are provided by Glu252, Asp296, and Asp298.

The protein belongs to the DnaG primase family. As to quaternary structure, monomer. Interacts with DnaB. Requires Zn(2+) as cofactor. The cofactor is Mg(2+).

It catalyses the reaction ssDNA + n NTP = ssDNA/pppN(pN)n-1 hybrid + (n-1) diphosphate.. Its function is as follows. RNA polymerase that catalyzes the synthesis of short RNA molecules used as primers for DNA polymerase during DNA replication. The polypeptide is DNA primase (Helicobacter pylori (strain J99 / ATCC 700824) (Campylobacter pylori J99)).